The chain runs to 264 residues: 3-methyl-2-oxobutanoate hydroxymethyltransferase (264 aa).

Residues D45 and D84 each contribute to the Mg(2+) site. 3-methyl-2-oxobutanoate contacts are provided by residues 45–46 (DS), D84, and K112. E114 contacts Mg(2+). E181 functions as the Proton acceptor in the catalytic mechanism.

Belongs to the PanB family. In terms of assembly, homodecamer; pentamer of dimers. Mg(2+) serves as cofactor.

It localises to the cytoplasm. It catalyses the reaction 3-methyl-2-oxobutanoate + (6R)-5,10-methylene-5,6,7,8-tetrahydrofolate + H2O = 2-dehydropantoate + (6S)-5,6,7,8-tetrahydrofolate. The protein operates within cofactor biosynthesis; (R)-pantothenate biosynthesis; (R)-pantoate from 3-methyl-2-oxobutanoate: step 1/2. Its function is as follows. Catalyzes the reversible reaction in which hydroxymethyl group from 5,10-methylenetetrahydrofolate is transferred onto alpha-ketoisovalerate to form ketopantoate. In Vibrio campbellii (strain ATCC BAA-1116), this protein is 3-methyl-2-oxobutanoate hydroxymethyltransferase.